We begin with the raw amino-acid sequence, 642 residues long: Probable serine/threonine-protein kinase drkA (642 aa).

The first 23 residues, 1-23 (MKKLPFLIIIIYIFLILISISSS), serve as a signal peptide directing secretion. At 24 to 322 (IDYNYNNDID…KPTISLLKKY (299 aa)) the chain is on the extracellular side. Residues 106-128 (SENSGSGSNSNSNSKNTDSSTGP) are compositionally biased toward low complexity. The tract at residues 106–136 (SENSGSGSNSNSNSKNTDSSTGPTPSPISIN) is disordered. 5 N-linked (GlcNAc...) asparagine glycosylation sites follow: asparagine 136, asparagine 140, asparagine 158, asparagine 244, and asparagine 271. A helical transmembrane segment spans residues 323 to 343 (LIIGFSIVGGLLIIGGCFLLI). Over 344–642 (RNRYRSSGYY…SDLQYVRQQL (299 aa)) the chain is Cytoplasmic. Positions 374-627 (IKIGVRIGKG…EQCLERLESI (254 aa)) constitute a Protein kinase domain. ATP contacts are provided by residues 380–388 (IGKGNYGEV) and lysine 401. Aspartate 497 serves as the catalytic Proton acceptor.

The protein belongs to the protein kinase superfamily. TKL Ser/Thr protein kinase family.

The protein resides in the membrane. The catalysed reaction is L-seryl-[protein] + ATP = O-phospho-L-seryl-[protein] + ADP + H(+). It catalyses the reaction L-threonyl-[protein] + ATP = O-phospho-L-threonyl-[protein] + ADP + H(+). The sequence is that of Probable serine/threonine-protein kinase drkA (drkA) from Dictyostelium discoideum (Social amoeba).